A 426-amino-acid chain; its full sequence is Dihydroorotase (426 aa).

2 residues coordinate Zn(2+): histidine 55 and histidine 57. Substrate contacts are provided by residues 57-59 (HLR) and asparagine 89. Zn(2+) is bound by residues aspartate 147, histidine 174, histidine 233, and aspartate 306. Aspartate 306 is a catalytic residue. Substrate contacts are provided by residues histidine 310 and 324-325 (FG).

Belongs to the metallo-dependent hydrolases superfamily. DHOase family. Class I DHOase subfamily. Zn(2+) serves as cofactor.

It carries out the reaction (S)-dihydroorotate + H2O = N-carbamoyl-L-aspartate + H(+). Its pathway is pyrimidine metabolism; UMP biosynthesis via de novo pathway; (S)-dihydroorotate from bicarbonate: step 3/3. Its function is as follows. Catalyzes the reversible cyclization of carbamoyl aspartate to dihydroorotate. In Thermus aquaticus, this protein is Dihydroorotase.